The following is a 132-amino-acid chain: Small ribosomal subunit protein uS11 (132 aa).

It belongs to the universal ribosomal protein uS11 family. In terms of assembly, part of the 30S ribosomal subunit. Interacts with proteins S7 and S18. Binds to IF-3.

Functionally, located on the platform of the 30S subunit, it bridges several disparate RNA helices of the 16S rRNA. Forms part of the Shine-Dalgarno cleft in the 70S ribosome. This is Small ribosomal subunit protein uS11 from Clostridioides difficile (strain 630) (Peptoclostridium difficile).